The following is a 363-amino-acid chain: 3-isopropylmalate dehydrogenase (363 aa).

79 to 92 (GPKWEHLPPNDQPE) provides a ligand contact to NAD(+). Substrate-binding residues include Arg100, Arg110, Arg139, and Asp228. Residues Asp228, Asp252, and Asp256 each contribute to the Mg(2+) site. 286–298 (GSAPDIAGKNIAN) contacts NAD(+).

Belongs to the isocitrate and isopropylmalate dehydrogenases family. LeuB type 1 subfamily. In terms of assembly, homodimer. Mg(2+) is required as a cofactor. It depends on Mn(2+) as a cofactor.

Its subcellular location is the cytoplasm. The enzyme catalyses (2R,3S)-3-isopropylmalate + NAD(+) = 4-methyl-2-oxopentanoate + CO2 + NADH. It participates in amino-acid biosynthesis; L-leucine biosynthesis; L-leucine from 3-methyl-2-oxobutanoate: step 3/4. Its function is as follows. Catalyzes the oxidation of 3-carboxy-2-hydroxy-4-methylpentanoate (3-isopropylmalate) to 3-carboxy-4-methyl-2-oxopentanoate. The product decarboxylates to 4-methyl-2 oxopentanoate. This chain is 3-isopropylmalate dehydrogenase, found in Aliivibrio fischeri (strain ATCC 700601 / ES114) (Vibrio fischeri).